The chain runs to 137 residues: MRTVGVFLATCLVTIFVLPTWGNWAYPCCHVTQLRAQHLLALENISDIYLVSNQTCDGFSLASLNSPKNGSNQLVISRCANGLNVVSFFISILKRSSSALTGHLRELLTTLETLYGSFSVEDLFGANLNRYAWHRGG.

The N-terminal stretch at 1 to 25 (MRTVGVFLATCLVTIFVLPTWGNWA) is a signal peptide. Residues 23–128 (NWAYPCCHVT…SVEDLFGANL (106 aa)) form an interaction with gH region. Disulfide bonds link cysteine 28–cysteine 56 and cysteine 29–cysteine 79.

The protein belongs to the herpesviridae glycoprotein L family. Interacts with glycoprotein H (gH); this interaction is necessary for the correct processing and cell surface expression of gH. The heterodimer gH/gL seems to interact with gB trimers during fusion. The heterodimer gH/gL interacts with host EPHA2 to facilitate virus internalization and fusion.

The protein resides in the virion membrane. It is found in the host cell membrane. Its subcellular location is the host Golgi apparatus. The protein localises to the host trans-Golgi network. Functionally, the heterodimer glycoprotein H-glycoprotein L is required for the fusion of viral and plasma membranes leading to virus entry into the host cell. Acts as a functional inhibitor of gH and maintains gH in an inhibited form. Upon binding to host integrins, gL dissociates from gH leading to activation of the viral fusion glycoproteins gB and gH. The heterodimer gH/gL targets also host EPHA2 to promote viral entry. This Epstein-Barr virus (strain AG876) (HHV-4) protein is Envelope glycoprotein L.